We begin with the raw amino-acid sequence, 359 residues long: Cytoplasmic tRNA 2-thiolation protein 1 (359 aa).

This sequence belongs to the TtcA family. CTU1/NCS6/ATPBD3 subfamily. As to quaternary structure, interacts with NCS2 and URM1. May act by forming a heterodimer with NCS2. Component of a large molecular weight complex of more than 250 kDa.

Its subcellular location is the cytoplasm. The protein localises to the mitochondrion. It participates in tRNA modification; 5-methoxycarbonylmethyl-2-thiouridine-tRNA biosynthesis. In terms of biological role, plays a central role in 2-thiolation of mcm(5)S(2)U at tRNA wobble positions of tRNA(Lys), tRNA(Glu) and tRNA(Gln). Directly binds tRNAs and probably acts by catalyzing adenylation of tRNAs, an intermediate required for 2-thiolation. It is unclear whether it acts as a sulfurtransferase that transfers sulfur from thiocarboxylated URM1 onto the uridine of tRNAs at wobble position. Prior mcm(5) tRNA modification by the elongator complex is required for 2-thiolation. May also be involved in protein urmylation. This chain is Cytoplasmic tRNA 2-thiolation protein 1, found in Saccharomyces cerevisiae (strain RM11-1a) (Baker's yeast).